We begin with the raw amino-acid sequence, 674 residues long: Primary amine oxidase (674 aa).

Residues 1 to 25 (MASTTTMRLALFSVLTLLSFHAVVS) form the signal peptide. N-linked (GlcNAc...) asparagine glycosylation occurs at Asn156. Residues Cys162 and Cys183 are joined by a disulfide bond. Positions 226–236 (ENTEYQVSKQS) are enriched in polar residues. Positions 226–251 (ENTEYQVSKQSPPFGPKQHSLTSHQP) are disordered. 323 to 334 (FFDSGEFGFGLS) serves as a coordination point for substrate. Catalysis depends on Asp325, which acts as the Proton acceptor. Cys344 and Cys370 are joined by a disulfide. Asn389 is a glycosylation site (N-linked (GlcNAc...) asparagine). Substrate is bound at residue 409–414 (VGNYDN). Tyr412 serves as the catalytic Schiff-base intermediate with substrate; via topaquinone. 2',4',5'-topaquinone is present on Tyr412. The Cu cation site is built by His467 and His469. Mn(2+) contacts are provided by Asp476, Phe477, Asp478, Asp617, and Ile618. His628 serves as a coordination point for Cu cation.

Belongs to the copper/topaquinone oxidase family. In terms of assembly, homodimer. It depends on Cu cation as a cofactor. Mn(2+) is required as a cofactor. The cofactor is L-topaquinone. In terms of processing, topaquinone (TPQ) is generated by copper-dependent autoxidation of a specific tyrosyl residue.

The enzyme catalyses a primary methyl amine + O2 + H2O = an aldehyde + H2O2 + NH4(+). This Pisum sativum (Garden pea) protein is Primary amine oxidase.